We begin with the raw amino-acid sequence, 117 residues long: Non-specific lipid-transfer protein 1 (117 aa).

The first 25 residues, 1–25, serve as a signal peptide directing secretion; the sequence is MAGLVKLSCLVLACMIVAGPIATNA. Cystine bridges form between Cys-29–Cys-76, Cys-39–Cys-53, Cys-54–Cys-99, and Cys-74–Cys-113.

The protein belongs to the plant LTP family.

In terms of biological role, plant non-specific lipid-transfer proteins transfer phospholipids as well as galactolipids across membranes. May play a role in wax or cutin deposition in the cell walls of expanding epidermal cells and certain secretory tissues. The chain is Non-specific lipid-transfer protein 1 (LTP1) from Brassica napus (Rape).